The chain runs to 237 residues: Golgi anti-apoptotic protein (237 aa).

Topologically, residues 1 to 37 are cytoplasmic; the sequence is MAMPSLSACSSIEDDFNYGSSVASASVHIRMAFLRKV. The helical transmembrane segment at 38–58 threads the bilayer; the sequence is YGILCLQFLLTTATTAVFLYF. Over 59-67 the chain is Lumenal; that stretch reads DCMRTFIQG. The chain crosses the membrane as a helical span at residues 68–88; it reads SPVLILASMFGSIGLIFALTL. Residues 89–94 are Cytoplasmic-facing; the sequence is HRHKHP. The chain crosses the membrane as a helical span at residues 95–115; sequence LNLYLLCGFTLSESLTLASVV. Position 116 (threonine 116) is a topological domain, lumenal. A helical membrane pass occupies residues 117 to 137; that stretch reads FYDVHVVMQAFMLTTAAFLAL. The Cytoplasmic segment spans residues 138-151; that stretch reads TTYTLQSKRDFSKL. A helical membrane pass occupies residues 152–172; it reads GAGLFAALWILILSGLLGIFV. Residues 173 to 174 are Lumenal-facing; it reads QN. The helical transmembrane segment at 175–195 threads the bilayer; the sequence is ETVKLVLSAFGALVFCGFIIY. The Cytoplasmic portion of the chain corresponds to 196–209; the sequence is DTHSLIHKLSPEEY. The segment at residues 210 to 230 is an intramembrane region (helical); that stretch reads VLASINLYLDIINLFLHLLQL. Residues 231–237 lie on the Cytoplasmic side of the membrane; the sequence is LEVSNKK.

This sequence belongs to the BI1 family. LFG subfamily.

The protein resides in the host Golgi apparatus membrane. In terms of biological role, may affect virulence through inhibition of apoptosis. The protein is Golgi anti-apoptotic protein (L6) of Vaccinia virus (strain LC16m0) (VACV).